A 168-amino-acid chain; its full sequence is Ribosome maturation factor RimM (168 aa).

One can recognise a PRC barrel domain in the interval glutamate 96 to phenylalanine 168.

It belongs to the RimM family. As to quaternary structure, binds ribosomal protein uS19.

It is found in the cytoplasm. Its function is as follows. An accessory protein needed during the final step in the assembly of 30S ribosomal subunit, possibly for assembly of the head region. Essential for efficient processing of 16S rRNA. May be needed both before and after RbfA during the maturation of 16S rRNA. It has affinity for free ribosomal 30S subunits but not for 70S ribosomes. The polypeptide is Ribosome maturation factor RimM (Coxiella burnetii (strain Dugway 5J108-111)).